A 172-amino-acid polypeptide reads, in one-letter code: Lipoprotein signal peptidase (172 aa).

The next 4 helical transmembrane spans lie at Leu-4–Val-24, Val-39–Phe-59, Trp-69–Leu-89, and Trp-93–Asp-113. Residues Asp-122 and Asp-140 contribute to the active site. The helical transmembrane segment at Phe-136–Trp-156 threads the bilayer.

It belongs to the peptidase A8 family.

It is found in the cell inner membrane. It catalyses the reaction Release of signal peptides from bacterial membrane prolipoproteins. Hydrolyzes -Xaa-Yaa-Zaa-|-(S,diacylglyceryl)Cys-, in which Xaa is hydrophobic (preferably Leu), and Yaa (Ala or Ser) and Zaa (Gly or Ala) have small, neutral side chains.. It participates in protein modification; lipoprotein biosynthesis (signal peptide cleavage). This protein specifically catalyzes the removal of signal peptides from prolipoproteins. In Hydrogenovibrio crunogenus (strain DSM 25203 / XCL-2) (Thiomicrospira crunogena), this protein is Lipoprotein signal peptidase.